The primary structure comprises 328 residues: Gonadotropin-releasing hormone receptor (328 aa).

Over 1 to 38 the chain is Extracellular; it reads MANGDSPDQNENHCSAINSSILLTPGSLPTLTLSGKIR. Asn-18 is a glycosylation site (N-linked (GlcNAc...) asparagine). Residues 39-58 form a helical membrane-spanning segment; it reads VTVTFFLFLLSTIFNTSFLL. Residues 59 to 77 are Cytoplasmic-facing; sequence KLQNWTQRKEKRKKLSKMK. A helical membrane pass occupies residues 78–97; that stretch reads VLLKHLTLANLLETLIVMPL. Residues 98-115 lie on the Extracellular side of the membrane; sequence DGMWNITVQWYAGELLCK. Asn-102 carries N-linked (GlcNAc...) asparagine glycosylation. Cys-114 and Cys-196 are disulfide-bonded. The helical transmembrane segment at 116–137 threads the bilayer; it reads VLSYLKLFSMYAPAFMMVVISL. At 138 to 164 the chain is on the cytoplasmic side; the sequence is DRSLAITRPLAVKSNSKLGQFMIGLAW. The helical transmembrane segment at 165–184 threads the bilayer; that stretch reads LLSSIFAGPQLYIFGMIHLA. Residues 185–212 are Extracellular-facing; that stretch reads DDSGQTEGFSQCVTHCSFPQWWHQAFYN. The chain crosses the membrane as a helical span at residues 213-232; sequence FFTFSCLFIIPLLIMLICNA. The Cytoplasmic segment spans residues 233-281; the sequence is KIIFTLTRVLHQDPHKLQLNQSKNNIPQARLRTLKMTVAFATSFTVCWT. Residues 282–300 traverse the membrane as a helical segment; that stretch reads PYYVLGIWYWFDPDMVNRV. Residues 301–306 lie on the Extracellular side of the membrane; that stretch reads SDPVNH. The chain crosses the membrane as a helical span at residues 307 to 326; that stretch reads FFFLFAFLNPCFDPLIYGYF. Topologically, residues 327–328 are cytoplasmic; sequence SL.

This sequence belongs to the G-protein coupled receptor 1 family.

The protein resides in the cell membrane. Its function is as follows. Receptor for gonadotropin releasing hormone (GnRH) that mediates the action of GnRH to stimulate the secretion of the gonadotropic hormones luteinizing hormone (LH) and follicle-stimulating hormone (FSH). This receptor mediates its action by association with G-proteins that activate a phosphatidylinositol-calcium second messenger system. This chain is Gonadotropin-releasing hormone receptor (GNRHR), found in Ovis aries (Sheep).